A 666-amino-acid chain; its full sequence is Hybrid PKS-NRPS synthetase pytA (666 aa).

A Ketosynthase family 3 (KS3) domain is found at methionine 1–glutamate 340. Active-site for beta-ketoacyl synthase activity residues include cysteine 87, histidine 222, and histidine 260. Residues valine 455–arginine 665 form a malonyl-CoA:ACP transacylase (MAT) domain region. Catalysis depends on serine 548, which acts as the For malonyltransferase activity.

In the C-terminal section; belongs to the NRP synthetase family.

Its pathway is secondary metabolite biosynthesis. In terms of biological role, hybrid PKS-NRPS synthetase; part of the gene cluster that mediates the biosynthesis of pyranterreones, a family of antioxidative compounds. The first step of pyranonigrins biosynthesis is performed by the hybrid PKS-NRPS synthetase pytA that condenses 4 malonyl-CoA units ato the acetyl starter unit by the modular PKS of pytA. The acyl chain is then connected to an L-serine through the amide bond by the modular NRPS of pytA. A tetramic acid is formed and released from the PKS-NRPS pytA to give pyranterreone 5 with the help of the thioesterase pytI. Pyranterreone 5 could be methylated by pytC to afford pyranterreone 6. Both pyranterreones 5 and 6 are subsequently oxidized by the FAD-linked oxidoreductase pytB and the cytochrome P450 monooxygenase pytD to form the fused gamma-pyrone core, resulting in pyranterreones 7 and 11, respectively. The hydroxy group at C-8 of pyranterreones 7 and 11 are dehydrated by the aspartyl protease pytH to form a delta-7 double bond to give pyranterreones 3 and 1, 2 accordingly. The exo-methylene of pyranterreone 3 could be reduced into a pendant methyl by reductase pytE to provide pyranterreone 4, also known as cordylactam. Pyranterreone 4 can be reconverted to pyranterreone 3 through pytB-catalyzed dehydrogenation or further oxidized to pyranterreones 9 and 10. The chain is Hybrid PKS-NRPS synthetase pytA from Aspergillus terreus (strain NIH 2624 / FGSC A1156).